The primary structure comprises 235 residues: Elongation factor Tu (235 aa).

The tr-type G domain occupies 1–125; the sequence is KNMITGAAQM…QVDEYIPAPE (125 aa). 47–50 contributes to the GTP binding site; the sequence is NKQD.

The protein belongs to the TRAFAC class translation factor GTPase superfamily. Classic translation factor GTPase family. EF-Tu/EF-1A subfamily. Monomer.

It is found in the cytoplasm. The catalysed reaction is GTP + H2O = GDP + phosphate + H(+). Its function is as follows. GTP hydrolase that promotes the GTP-dependent binding of aminoacyl-tRNA to the A-site of ribosomes during protein biosynthesis. In Leptolyngbya ectocarpi (Phormidium ectocarpi), this protein is Elongation factor Tu (tufA).